The chain runs to 226 residues: Oxaloacetate tautomerase FAHD2, mitochondrial (226 aa).

Residues 1 to 30 (MAAAAQRLLAASTKIVGVGRNFVAHAKELG) constitute a mitochondrion transit peptide. Mg(2+) contacts are provided by glutamate 69, glutamate 71, and aspartate 100.

This sequence belongs to the FAH family. Mg(2+) serves as cofactor. Requires Mn(2+) as cofactor.

It is found in the mitochondrion. The catalysed reaction is oxaloacetate = enol-oxaloacetate. In terms of biological role, tautomerase that converts enol-oxaloacetate, a strong inhibitor of succinate dehydrogenase, to the physiological keto form of oxaloacetate. The polypeptide is Oxaloacetate tautomerase FAHD2, mitochondrial (Oryza sativa subsp. japonica (Rice)).